A 620-amino-acid chain; its full sequence is MSFDIAKYPTLALVDSTQELRLLPKESLPKLCDELRRYLLDSVSRSSGHFASGLGTVELTVALHYVYNTPFDQLIWDVGHQAYPHKILTGRRDKIGTIRQKGGLHPFPWRGESEYDVLSVGHSSTSISAGIGIAVAAEKEGKNRRTVCVIGDGAITAGMAFEAMNHAGDIRPDMLVVLNDNEMSISENVGALNNHLAQLLSGKLYSSLREGGKKVFSGVPPIKELLKRTEEHIKGMVVPGTLFEELGFNYIGPVDGHDVLGLITTLKNMRDLKGPQFLHIMTKKGRGYEPAEKDPITFHAVPKFDPSSGCLPKSSGGLPSYSKIFGDWLCETAAKDNKLMAITPAMREGSGMVEFSRKFPDRYFDVAIAEQHAVTFAAGLAIGGYKPIVAIYSTFLQRAYDQVLHDVAIQKLPVLFAIDRAGIVGADGQTHQGAFDLSYLRCIPEMVIMTPSDENECRQMLYTGYHYNDGPSAVRYPRGNAVGVELTPLEKLPIGKGIVKRRGEKLAILNFGTLMPEAAKVAESLNATLVDMRFVKPLDEALILEMAASHEALVTVEENAIMGGAGSGVNEVLMAHRKPVPVLNIGLPDFFIPQGTQEEMRAELGLDAAGMEAKIKAWLA.

Residues H80 and 121 to 123 (GHS) contribute to the thiamine diphosphate site. D152 provides a ligand contact to Mg(2+). Thiamine diphosphate is bound by residues 153–154 (GA), N181, Y288, and E370. Mg(2+) is bound at residue N181.

The protein belongs to the transketolase family. DXPS subfamily. Homodimer. The cofactor is Mg(2+). Thiamine diphosphate is required as a cofactor.

It carries out the reaction D-glyceraldehyde 3-phosphate + pyruvate + H(+) = 1-deoxy-D-xylulose 5-phosphate + CO2. Its pathway is metabolic intermediate biosynthesis; 1-deoxy-D-xylulose 5-phosphate biosynthesis; 1-deoxy-D-xylulose 5-phosphate from D-glyceraldehyde 3-phosphate and pyruvate: step 1/1. In terms of biological role, catalyzes the acyloin condensation reaction between C atoms 2 and 3 of pyruvate and glyceraldehyde 3-phosphate to yield 1-deoxy-D-xylulose-5-phosphate (DXP). The protein is 1-deoxy-D-xylulose-5-phosphate synthase of Shigella boydii serotype 18 (strain CDC 3083-94 / BS512).